The following is a 296-amino-acid chain: 4-diphosphocytidyl-2-C-methyl-D-erythritol kinase (296 aa).

Residue K13 is part of the active site. 98–108 is an ATP binding site; the sequence is PVAAGIGGGSA. D140 is a catalytic residue.

It belongs to the GHMP kinase family. IspE subfamily.

It catalyses the reaction 4-CDP-2-C-methyl-D-erythritol + ATP = 4-CDP-2-C-methyl-D-erythritol 2-phosphate + ADP + H(+). The protein operates within isoprenoid biosynthesis; isopentenyl diphosphate biosynthesis via DXP pathway; isopentenyl diphosphate from 1-deoxy-D-xylulose 5-phosphate: step 3/6. In terms of biological role, catalyzes the phosphorylation of the position 2 hydroxy group of 4-diphosphocytidyl-2C-methyl-D-erythritol. In Rhodopseudomonas palustris (strain HaA2), this protein is 4-diphosphocytidyl-2-C-methyl-D-erythritol kinase.